We begin with the raw amino-acid sequence, 230 residues long: Ly6/PLAUR domain-containing protein 8 (230 aa).

Positions 1–20 (MKSFLFAGIVVVLTVAAVDT) are cleaved as a signal peptide. N37, N44, N74, N77, N90, N106, N110, N132, N137, N156, N168, N181, and N197 each carry an N-linked (GlcNAc...) asparagine glycan. A UPAR/Ly6 domain is found at 125 to 172 (CPACYGNNETSCNETRKCYGERCVSIIAEFTNETKTLVLKGCSNVSIS). A lipid anchor (GPI-anchor amidated serine) is attached at S211. Residues 212–230 (QASFTPLALASILLLSLLL) constitute a propeptide, removed in mature form.

This sequence belongs to the CNF-like-inhibitor family. In terms of processing, highly N-glycosylated. Not O-glycosylated. Post-translationally, GPI-anchored. The GPI-anchor is cleaved, leading to secretion into the colonic lumen.

Its subcellular location is the cell membrane. The protein resides in the secreted. In terms of biological role, secreted protein specifically required to prevent invasion of Gram-negative bacteria in the inner mucus layer of the colon epithelium, a portion of the large intestine which is free of commensal microbiota. Prevents invasion of flagellated microbiota by binding to the flagellum of bacteria, such as P.mirabilis, thereby inhibiting bacterial motility in the intestinal lumen. Segregation of intestinal bacteria and epithelial cells in the colon is required to preserve intestinal homeostasis. The protein is Ly6/PLAUR domain-containing protein 8 (LYPD8) of Bos taurus (Bovine).